The primary structure comprises 547 residues: Chaperonin GroEL (547 aa).

Residues 30 to 33 (TLGP), K51, 87 to 91 (DGTTT), G415, and D496 contribute to the ATP site. Residues 527–547 (SDKEEPMPMRGGMGGMGGMDF) form a disordered region. The span at 537-547 (GGMGGMGGMDF) shows a compositional bias: gly residues.

The protein belongs to the chaperonin (HSP60) family. In terms of assembly, forms a cylinder of 14 subunits composed of two heptameric rings stacked back-to-back. Interacts with the co-chaperonin GroES.

The protein localises to the cytoplasm. The catalysed reaction is ATP + H2O + a folded polypeptide = ADP + phosphate + an unfolded polypeptide.. Together with its co-chaperonin GroES, plays an essential role in assisting protein folding. The GroEL-GroES system forms a nano-cage that allows encapsulation of the non-native substrate proteins and provides a physical environment optimized to promote and accelerate protein folding. This chain is Chaperonin GroEL, found in Rickettsia massiliae (strain Mtu5).